We begin with the raw amino-acid sequence, 331 residues long: Phosphoribosylformylglycinamidine cyclo-ligase (331 aa).

This sequence belongs to the AIR synthase family.

The protein resides in the cytoplasm. The catalysed reaction is 2-formamido-N(1)-(5-O-phospho-beta-D-ribosyl)acetamidine + ATP = 5-amino-1-(5-phospho-beta-D-ribosyl)imidazole + ADP + phosphate + H(+). Its pathway is purine metabolism; IMP biosynthesis via de novo pathway; 5-amino-1-(5-phospho-D-ribosyl)imidazole from N(2)-formyl-N(1)-(5-phospho-D-ribosyl)glycinamide: step 2/2. The sequence is that of Phosphoribosylformylglycinamidine cyclo-ligase from Clostridium novyi (strain NT).